We begin with the raw amino-acid sequence, 451 residues long: D-inositol 3-phosphate glycosyltransferase (451 aa).

Histidine 37 serves as a coordination point for 1D-myo-inositol 3-phosphate. UDP-N-acetyl-alpha-D-glucosamine contacts are provided by residues 43 to 44 and glycine 51; that span reads QP. 1D-myo-inositol 3-phosphate is bound by residues 48–53, lysine 106, tyrosine 138, threonine 162, and arginine 182; that span reads DAGGMN. UDP-N-acetyl-alpha-D-glucosamine is bound by residues arginine 259, lysine 264, and arginine 323. Mg(2+)-binding residues include tyrosine 332, arginine 333, and alanine 335. UDP-N-acetyl-alpha-D-glucosamine-binding residues include glutamate 345 and glutamate 353. Threonine 359 is a binding site for Mg(2+).

This sequence belongs to the glycosyltransferase group 1 family. MshA subfamily. Homodimer.

The catalysed reaction is 1D-myo-inositol 3-phosphate + UDP-N-acetyl-alpha-D-glucosamine = 1D-myo-inositol 2-acetamido-2-deoxy-alpha-D-glucopyranoside 3-phosphate + UDP + H(+). Its function is as follows. Catalyzes the transfer of a N-acetyl-glucosamine moiety to 1D-myo-inositol 3-phosphate to produce 1D-myo-inositol 2-acetamido-2-deoxy-glucopyranoside 3-phosphate in the mycothiol biosynthesis pathway. This is D-inositol 3-phosphate glycosyltransferase from Corynebacterium kroppenstedtii (strain DSM 44385 / JCM 11950 / CIP 105744 / CCUG 35717).